The chain runs to 360 residues: Peptide chain release factor 1 (360 aa).

At Gln-235 the chain carries N5-methylglutamine. Basic and acidic residues predominate over residues 280 to 293 (DKQSHEQQAKEAAT). Residues 280–300 (DKQSHEQQAKEAATRKSLIGS) are disordered.

It belongs to the prokaryotic/mitochondrial release factor family. In terms of processing, methylated by PrmC. Methylation increases the termination efficiency of RF1.

Its subcellular location is the cytoplasm. Functionally, peptide chain release factor 1 directs the termination of translation in response to the peptide chain termination codons UAG and UAA. This is Peptide chain release factor 1 from Paraburkholderia xenovorans (strain LB400).